The primary structure comprises 98 residues: Histone H4-1 (98 aa).

Gly residues predominate over residues 1–14 (MGGKGGKGGKGLGK). A disordered region spans residues 1–20 (MGGKGGKGGKGLGKVGAKKR).

The protein belongs to the histone H4 family. As to quaternary structure, the nucleosome is a histone octamer containing two molecules each of H2A, H2B, H3 and H4 assembled in one H3-H4 heterotetramer and two H2A-H2B heterodimers. The octamer wraps approximately 147 bp of DNA.

It localises to the nucleus. Its subcellular location is the chromosome. In terms of biological role, core component of nucleosome. Nucleosomes wrap and compact DNA into chromatin, limiting DNA accessibility to the cellular machineries which require DNA as a template. Histones thereby play a central role in transcription regulation, DNA repair, DNA replication and chromosomal stability. DNA accessibility is regulated via a complex set of post-translational modifications of histones, also called histone code, and nucleosome remodeling. The polypeptide is Histone H4-1 (Blepharisma japonicum).